The following is a 683-amino-acid chain: Transforming growth factor-beta-induced protein ig-h3 (683 aa).

The N-terminal stretch at 1-23 (MALLMRLLTLALALSVGPAGTLA) is a signal peptide. Ser-37 bears the Phosphoserine mark. One can recognise an EMI domain in the interval 45 to 99 (GPNVCAVQKVIGTNKKYFTNCKQWYQRKICGKSTVISYECCPGYEKVPGEKGCPA). Intrachain disulfides connect Cys-49–Cys-85, Cys-74–Cys-339, Cys-84–Cys-97, Cys-214–Cys-317, and Cys-473–Cys-478. Cys-65 bears the S-cysteinyl cysteine mark. FAS1 domains follow at residues 103 to 236 (LSNL…DKVI), 240 to 371 (TNNI…DELL), 375 to 498 (SAKT…DRML), and 502 to 632 (MGTV…NTVL). The short motif at 642–644 (RGD) is the Cell attachment site element.

In terms of assembly, binds to type I, II, and IV collagens. Gamma-carboxylation is controversial. Gamma-carboxyglutamated; gamma-carboxyglutamate residues are formed by vitamin K dependent carboxylation; this may be required for calcium binding. According to a more recent report, does not contain vitamin K-dependent gamma-carboxyglutamate residues. In terms of processing, the EMI domain contains 2 expected intradomain disulfide bridges (Cys-49-Cys85 and Cys-84-Cys-97) and one unusual interdomain disulfide bridge to the second FAS1 domain (Cys-74-Cys-339). This arrangement violates the predicted disulfide bridge pattern of an EMI domain. Expressed in heart, kidney, liver, skeletal muscle, testis, thyroid and uterus.

It is found in the secreted. Its subcellular location is the extracellular space. The protein localises to the extracellular matrix. Its function is as follows. Plays a role in cell adhesion. May play a role in cell-collagen interactions. This Mus musculus (Mouse) protein is Transforming growth factor-beta-induced protein ig-h3 (Tgfbi).